We begin with the raw amino-acid sequence, 142 residues long: Large ribosomal subunit protein uL11 (142 aa).

This sequence belongs to the universal ribosomal protein uL11 family. Part of the ribosomal stalk of the 50S ribosomal subunit. Interacts with L10 and the large rRNA to form the base of the stalk. L10 forms an elongated spine to which L12 dimers bind in a sequential fashion forming a multimeric L10(L12)X complex. One or more lysine residues are methylated.

Its function is as follows. Forms part of the ribosomal stalk which helps the ribosome interact with GTP-bound translation factors. This chain is Large ribosomal subunit protein uL11, found in Pseudoalteromonas translucida (strain TAC 125).